The chain runs to 66 residues: Large ribosomal subunit protein bL33c (66 aa).

This sequence belongs to the bacterial ribosomal protein bL33 family.

It localises to the plastid. The protein localises to the chloroplast. This is Large ribosomal subunit protein bL33c from Lobularia maritima (Sweet alyssum).